The primary structure comprises 2387 residues: Paternally-expressed gene 3 protein (2387 aa).

The region spanning 44 to 126 (HQRFRNFLYV…ALLEDYEAMY (83 aa)) is the SCAN box domain. Disordered stretches follow at residues 127-194 (EPED…RDLA), 262-305 (DGHS…ICEA), 321-371 (ARSS…AFGG), and 392-423 (RYHFDAEGQGPVHDPRGGARKRPFECGGEARR). 4 stretches are compositionally biased toward basic and acidic residues: residues 160 to 179 (SERERRRGRSRDMESRDRWP), 291 to 305 (PETKKSAHRRGICEA), 321 to 364 (ARSS…ERGP), and 404 to 423 (HDPRGGARKRPFECGGEARR). The C2H2-type 1 zinc finger occupies 451 to 473 (YVCDECGRSFAVISEFVEHQIVH). Residues 492–542 (SEAQSRPEGARRSEGAQAAGLAEHRGGQAQEHLRGSGDEEQDEPFLPSPTF) form a disordered region. Residues 513–528 (AEHRGGQAQEHLRGSG) show a composition bias toward basic and acidic residues. C2H2-type zinc fingers lie at residues 555–577 (YECKVCKETFLHSSALIEHQKIH) and 610–632 (YECKVCGETFHHSAALREHQKTH). A C2H2-type 4; degenerate zinc finger spans residues 668–690 (YDFREGGDAFGRSSDFMEHQKIH). 3 disordered regions span residues 704 to 747 (PLLH…EARG), 764 to 797 (FRPPRGLREDGEPSTYLSGLRDPPQKTPAWESPY), and 820 to 858 (DHLAGEGPSGWQRDGEASGPSSDGRQHQKARAKKKNIER). Residues 711-720 (MPGSQKSHTI) are compositionally biased toward polar residues. Over residues 846 to 856 (HQKARAKKKNI) the composition is skewed to basic residues. The C2H2-type 5 zinc-finger motif lies at 884-906 (YECLECGEFFVRSSELAEHQKIH). Repeat copies occupy residues 965–973 (PAQTSYAVE), 974–982 (PAQTSYAEE), 983–991 (PAQTSYTEA), 1001–1009 (PAQTSCIEE), 1010–1018 (PAQTSYTNP), 1028–1036 (PAQTSYTEA), 1046–1054 (PAQTSCIEE), 1055–1063 (PAQTSYTNP), 1073–1081 (PAQTSYTEA), 1091–1099 (PAQTNYTEE), 1109–1117 (PSQTSCIEE), 1118–1126 (PAQTSYTDP), 1136–1144 (PAQTSYTQE), 1145–1153 (PAQTSCTEE), 1154–1162 (PAQTSCTEE), 1163–1171 (PAQTSYTQE), 1172–1180 (PAQTSYTKE), 1190–1198 (PAQTSCIEE), 1199–1207 (PAQTNYTKE), 1217–1225 (PAQTSYTDP), 1235–1243 (PAQTNYTVE), 1253–1261 (PSQTSCIEE), 1280–1288 (PAQTSCTEE), 1289–1297 (PAQTSYTQE), 1298–1306 (PAQTSCTEE), 1307–1315 (PAQTSCTEE), 1316–1324 (PAQTSYTQE), 1325–1333 (PAQTSCTEE), 1334–1342 (PAQTSYTQE), 1343–1351 (PAQTSCTEE), 1352–1360 (PAQTSYTEE), 1361–1369 (PAQTSYTEE), 1370–1378 (PAQTSYTQE), 1379–1387 (PAQTSCTEE), 1388–1396 (PAQTSYTEE), 1397–1405 (PAQTSYTEE), 1406–1414 (PAQTSYTQE), 1415–1423 (PAQTSYTEE), 1424–1432 (PAQTSYTEE), 1433–1441 (PAQTSYAQE), 1442–1450 (PAQTSYAEE), 1451–1459 (PAQTSYAEE), 1460–1468 (PAQTSYAEE), 1469–1477 (PAQTSYTQE), 1478–1486 (PAQTNYTEE), 1496–1504 (PAQTSYAEE), 1505–1513 (PAQTSYPEE), 1514–1522 (PAQTSYAEE), 1523–1531 (PAQTSYAEE), 1532–1540 (PAQTSYPEE), 1541–1549 (PAQTSYTEE), 1550–1558 (PAQTSYAKE), 1559–1567 (PAQTSYPEE), 1568–1576 (PAQTSYAEE), 1577–1585 (PAQTSYAEE), 1586–1594 (PAQTSYAEE), and 1595–1603 (PAQTSYSEE). Polar residues-rich tracts occupy residues 965-989 (PAQTSYAVEPAQTSYAEEPAQTSYT) and 1001-1020 (PAQTSCIEEPAQTSYTNPAA). A 37 X 9 AA repeat of P-A-Q-T-X-Y-X-X-E region spans residues 965–1603 (PAQTSYAVEP…EPAQTSYSEE (639 aa)). Positions 965 to 1651 (PAQTSYAVEP…RPDMPRNQPR (687 aa)) are disordered. Polar residues predominate over residues 1046–1079 (PAQTSCIEEPAQTSYTNPAAETSYTEEPAQTSYT). Polar residues-rich tracts occupy residues 1107 to 1178 (EEPS…TSYT), 1190 to 1206 (PAQTSCIEEPAQTNYTK), 1217 to 1242 (PAQTSYTDPAAETSYTEEPAQTNYTV), 1251 to 1484 (EEPS…TNYT), and 1496 to 1601 (PAQT…TSYS). The C2H2-type 6; degenerate zinc finger occupies 1859–1881 (NECKECGECFATVEDLGRHQKIY). The disordered stretch occupies residues 1900-1921 (LGLDGSPEEELEEQEEPEEPED). Over residues 1905-1921 (SPEEELEEQEEPEEPED) the composition is skewed to acidic residues. C2H2-type zinc fingers lie at residues 1924–1946 (YGCKDCGLGFADRADLRDHQKVH), 1980–2002 (YECPACGESFVHSSFLFEHQKVH), 2040–2062 (PQCQVCGQDFIHASVLSEHARGH), 2097–2119 (YECETCGESFPSQADLQEHMRVH), and 2148–2170 (YECKDCGKSFIHSTILTKHQKLH). Residues 2059 to 2102 (ARGHAGEGLPDQGQGGAGAAGPGPAPTEPQQDPGEEQRYECETC) are disordered. A disordered region spans residues 2204 to 2322 (NVEAAEPEVE…DCGECGETFP (119 aa)). Acidic residues-rich tracts occupy residues 2208–2228 (AEPEVEAAEPEVEAAEPEVEA) and 2257–2311 (EQPD…EEPY). 2 C2H2-type zinc fingers span residues 2312-2334 (YDCGECGETFPSGAAYAEHLTAH) and 2363-2385 (FKCDVCGQLFSDRLSLARHQNTH).

This sequence belongs to the krueppel C2H2-type zinc-finger protein family. In terms of assembly, homodimer. Interacts with SIAH1A and SIAH2. Interacts with TRAF2. In terms of tissue distribution, expressed at high levels in the cerebellum and at moderate levels in the testis and ovary.

It is found in the nucleus. Its subcellular location is the cytoplasm. Functionally, induces apoptosis in cooperation with SIAH1A. Acts as a mediator between p53/TP53 and BAX in a neuronal death pathway that is activated by DNA damage. Acts synergistically with TRAF2 and inhibits TNF induced apoptosis through activation of NF-kappa-B. The protein is Paternally-expressed gene 3 protein (PEG3) of Bos taurus (Bovine).